The following is a 321-amino-acid chain: Probable NAD(P)H-dependent D-xylose reductase xyl1 (321 aa).

Tyr-50 serves as the catalytic Proton donor. His-112 contacts substrate. NAD(+) is bound by residues 166-167, 215-224, and 271-281; these read SN, SSFGPLSFVE, and KSNDPTRLAQN.

It belongs to the aldo/keto reductase family.

The catalysed reaction is xylitol + NAD(+) = D-xylose + NADH + H(+). The enzyme catalyses xylitol + NADP(+) = D-xylose + NADPH + H(+). It functions in the pathway carbohydrate metabolism; D-xylose degradation. Catalyzes the initial reaction in the xylose utilization pathway by reducing D-xylose into xylitol. Xylose is a major component of hemicelluloses such as xylan. Most fungi utilize D-xylose via three enzymatic reactions, xylose reductase (XR), xylitol dehydrogenase (XDH), and xylulokinase, to form xylulose 5-phosphate, which enters pentose phosphate pathway. The chain is Probable NAD(P)H-dependent D-xylose reductase xyl1 (xyl1) from Neosartorya fischeri (strain ATCC 1020 / DSM 3700 / CBS 544.65 / FGSC A1164 / JCM 1740 / NRRL 181 / WB 181) (Aspergillus fischerianus).